The primary structure comprises 361 residues: Actin maturation protease (361 aa).

The segment at 1–75 (MTSPCSFPLK…PPPPPLPSAV (75 aa)) is disordered. Composition is skewed to pro residues over residues 24–33 (NIPPPLPLNP) and 52–72 (PLPP…PPLP). The tract at residues 134-254 (SCIQEGPQCG…WAVSAGVLIG (121 aa)) is peptidase C39-like. Cys142 is an active-site residue.

The protein belongs to the ACTMAP family. As to quaternary structure, interacts (via N-terminus) with PFN2 isoforms 1/IIa and 2/IIb; the interactions may facilitate efficient cleavage of the acetylated N-terminus of immature actin. Interacts with PFN1.

The protein resides in the cytoplasm. It carries out the reaction N-terminal N(alpha)-acetyl-L-methionyl-L-aspartyl-[protein] + H2O = N-terminal L-aspartyl-[protein] + N-acetyl-L-methionine. It catalyses the reaction N-terminal N(alpha)-acetyl-L-methionyl-L-glutamyl-[protein] + H2O = N-terminal L-glutamyl-[protein] + N-acetyl-L-methionine. The catalysed reaction is N-terminal N(alpha)-acetyl-L-cysteinyl-L-aspartyl-[protein] + H2O = N-terminal L-aspartyl-[protein] + N-acetyl-L-cysteine. The enzyme catalyses N-terminal N(alpha)-acetyl-L-cysteinyl-L-glutamyl-[protein] + H2O = N-terminal L-glutamyl-[protein] + N-acetyl-L-cysteine. In terms of biological role, actin maturation protease that specifically mediates the cleavage of immature acetylated N-terminal actin, thereby contributing to actin maturation. Cleaves N-terminal acetylated methionine of immature cytoplasmic beta- and gamma-actins Actb and Actg1 after translation. Cleaves N-terminal acetylated cysteine of muscle alpha-actins Acta1, Actc1 and Acta2 after canonical removal of N-terminal methionine. In Mus musculus (Mouse), this protein is Actin maturation protease.